The sequence spans 58 residues: Mu-diguetoxin-Dc1b (58 aa).

4 disulfide bridges follow: C12–C26, C20–C40, C25–C54, and C42–C52.

The protein belongs to the neurotoxin 26 (DTX) family. In terms of tissue distribution, expressed by the venom gland.

Its subcellular location is the secreted. Functionally, acts by delaying the inactivation of presynaptic voltage-sensitive sodium channels (Nav). Acts against insects and cause a progressive spastic paralysis. The protein is Mu-diguetoxin-Dc1b of Diguetia canities (Desert bush spider).